Here is a 492-residue protein sequence, read N- to C-terminus: Bifunctional purine biosynthesis protein PurH (492 aa).

Residues 1-144 enclose the MGS-like domain; sequence MKKVILSVSD…KNFKHVTTIV (144 aa).

Belongs to the PurH family.

The enzyme catalyses (6R)-10-formyltetrahydrofolate + 5-amino-1-(5-phospho-beta-D-ribosyl)imidazole-4-carboxamide = 5-formamido-1-(5-phospho-D-ribosyl)imidazole-4-carboxamide + (6S)-5,6,7,8-tetrahydrofolate. The catalysed reaction is IMP + H2O = 5-formamido-1-(5-phospho-D-ribosyl)imidazole-4-carboxamide. It participates in purine metabolism; IMP biosynthesis via de novo pathway; 5-formamido-1-(5-phospho-D-ribosyl)imidazole-4-carboxamide from 5-amino-1-(5-phospho-D-ribosyl)imidazole-4-carboxamide (10-formyl THF route): step 1/1. The protein operates within purine metabolism; IMP biosynthesis via de novo pathway; IMP from 5-formamido-1-(5-phospho-D-ribosyl)imidazole-4-carboxamide: step 1/1. In Staphylococcus carnosus (strain TM300), this protein is Bifunctional purine biosynthesis protein PurH.